A 171-amino-acid polypeptide reads, in one-letter code: Adenine phosphoribosyltransferase (171 aa).

Belongs to the purine/pyrimidine phosphoribosyltransferase family. In terms of assembly, homodimer.

The protein localises to the cytoplasm. The enzyme catalyses AMP + diphosphate = 5-phospho-alpha-D-ribose 1-diphosphate + adenine. The protein operates within purine metabolism; AMP biosynthesis via salvage pathway; AMP from adenine: step 1/1. In terms of biological role, catalyzes a salvage reaction resulting in the formation of AMP, that is energically less costly than de novo synthesis. The sequence is that of Adenine phosphoribosyltransferase from Geobacter metallireducens (strain ATCC 53774 / DSM 7210 / GS-15).